Here is a 353-residue protein sequence, read N- to C-terminus: Glutamine synthetase nodule isozyme (353 aa).

The 81-residue stretch at 19-99 (IIAEYIWVGG…VMCDTYTPAG (81 aa)) folds into the GS beta-grasp domain. Positions 106–353 (KRHAAAKIFS…TSMIAETTLL (248 aa)) constitute a GS catalytic domain.

The protein belongs to the glutamine synthetase family. In terms of assembly, homooctamer.

Its subcellular location is the cytoplasm. It carries out the reaction L-glutamate + NH4(+) + ATP = L-glutamine + ADP + phosphate + H(+). The protein is Glutamine synthetase nodule isozyme of Lupinus luteus (European yellow lupine).